The sequence spans 319 residues: Vesicle-associated membrane protein-associated protein scs22 (319 aa).

The region spanning 1–121 (MALECDSTIV…SERKIRCVYS (121 aa)) is the MSP domain. Residues 1–298 (MALECDSTIV…GAKVVPQIHN (298 aa)) lie on the Cytoplasmic side of the membrane. Low complexity predominate over residues 127 to 150 (ANAHANAHHQPAQTTTTSIPTSAT). Positions 127–244 (ANAHANAHHQ…TTSPNNENNA (118 aa)) are disordered. Composition is skewed to polar residues over residues 151-165 (DNYT…QSYS), 185-201 (STAT…SAVS), and 231-244 (SVPT…ENNA). Position 236 is a phosphothreonine (threonine 236). Phosphoserine is present on residues serine 237 and serine 281. Residues 299-319 (TVTVQTAFLLAIICFLIGLLF) form a helical; Anchor for type IV membrane protein membrane-spanning segment.

Belongs to the VAMP-associated protein (VAP) (TC 9.B.17) family. As to quaternary structure, interacts with epr1.

Its subcellular location is the endoplasmic reticulum membrane. Vesicle-associated membrane protein-associated protein (VAP) implicated in maintaining the cortical endoplasmic reticulum (ER)-plasma membrane (PM) attachment. ER-PM contacts function to modulate the distribution of contractile ring components to ensure robust ring assembly. ER-PM contacts function also in controlling exocytosis and maintenance of cell polarity regulating cell shape. VAPs play an important role in regulating eisosome assembly. VAPs also contribute to ER-phagy by tethering atg8 to the ER membrane, but also by maintaining the ER-plasma membrane contact. The protein is Vesicle-associated membrane protein-associated protein scs22 (scs22) of Schizosaccharomyces pombe (strain 972 / ATCC 24843) (Fission yeast).